A 416-amino-acid polypeptide reads, in one-letter code: S-adenosylmethionine synthase (416 aa).

His14 serves as a coordination point for ATP. Asp16 contacts Mg(2+). Position 42 (Glu42) interacts with K(+). Glu55 and Gln98 together coordinate L-methionine. The interval 98–108 (QSADINQGVDR) is flexible loop. ATP is bound by residues 164–166 (DAK), 240–241 (KF), Asp249, 255–256 (RK), Ala272, and Lys276. L-methionine is bound at residue Asp249. L-methionine is bound at residue Lys280.

It belongs to the AdoMet synthase family. Homotetramer; dimer of dimers. Mg(2+) serves as cofactor. K(+) is required as a cofactor.

It localises to the cytoplasm. It carries out the reaction L-methionine + ATP + H2O = S-adenosyl-L-methionine + phosphate + diphosphate. Its pathway is amino-acid biosynthesis; S-adenosyl-L-methionine biosynthesis; S-adenosyl-L-methionine from L-methionine: step 1/1. Its function is as follows. Catalyzes the formation of S-adenosylmethionine (AdoMet) from methionine and ATP. The overall synthetic reaction is composed of two sequential steps, AdoMet formation and the subsequent tripolyphosphate hydrolysis which occurs prior to release of AdoMet from the enzyme. This is S-adenosylmethionine synthase from Flavobacterium psychrophilum (strain ATCC 49511 / DSM 21280 / CIP 103535 / JIP02/86).